The sequence spans 375 residues: tRNA-specific 2-thiouridylase MnmA (375 aa).

ATP contacts are provided by residues 20–27 (AMSGGVDS) and L46. Residue C114 is the Nucleophile of the active site. C114 and C211 are joined by a disulfide. An ATP-binding site is contributed by G138. Positions 160–162 (RDQ) are interaction with tRNA. Residue C211 is the Cysteine persulfide intermediate of the active site.

This sequence belongs to the MnmA/TRMU family.

It localises to the cytoplasm. The enzyme catalyses S-sulfanyl-L-cysteinyl-[protein] + uridine(34) in tRNA + AH2 + ATP = 2-thiouridine(34) in tRNA + L-cysteinyl-[protein] + A + AMP + diphosphate + H(+). Its function is as follows. Catalyzes the 2-thiolation of uridine at the wobble position (U34) of tRNA, leading to the formation of s(2)U34. In Ruegeria pomeroyi (strain ATCC 700808 / DSM 15171 / DSS-3) (Silicibacter pomeroyi), this protein is tRNA-specific 2-thiouridylase MnmA.